We begin with the raw amino-acid sequence, 136 residues long: Large ribosomal subunit protein eL27 (136 aa).

A KOW domain is found at 5 to 36 (MKPGKVVLVLRGKYAGRKAVVVKQQDEGVSDR).

It belongs to the eukaryotic ribosomal protein eL27 family. Component of the large ribosomal subunit.

Its subcellular location is the cytoplasm. The protein localises to the cytosol. It is found in the rough endoplasmic reticulum. Functionally, component of the large ribosomal subunit. The chain is Large ribosomal subunit protein eL27 (rpl-27) from Caenorhabditis elegans.